Reading from the N-terminus, the 118-residue chain is NADH-quinone oxidoreductase subunit A 1 (118 aa).

The next 3 membrane-spanning stretches (helical) occupy residues 1 to 21 (MLGV…FGLA), 60 to 80 (FYII…MYPW), and 87 to 107 (LGIF…VGYI).

The protein belongs to the complex I subunit 3 family. In terms of assembly, NDH-1 is composed of 14 different subunits. Subunits NuoA, H, J, K, L, M, N constitute the membrane sector of the complex.

The protein resides in the cell inner membrane. It carries out the reaction a quinone + NADH + 5 H(+)(in) = a quinol + NAD(+) + 4 H(+)(out). NDH-1 shuttles electrons from NADH, via FMN and iron-sulfur (Fe-S) centers, to quinones in the respiratory chain. The immediate electron acceptor for the enzyme in this species is believed to be ubiquinone. Couples the redox reaction to proton translocation (for every two electrons transferred, four hydrogen ions are translocated across the cytoplasmic membrane), and thus conserves the redox energy in a proton gradient. The chain is NADH-quinone oxidoreductase subunit A 1 from Geobacter sulfurreducens (strain ATCC 51573 / DSM 12127 / PCA).